The primary structure comprises 782 residues: Endonuclease MutS2 (782 aa).

336–343 (GPNTGGKT) contacts ATP. The 76-residue stretch at 707 to 782 (LDLRGYRYED…GFGVTVATLK (76 aa)) folds into the Smr domain.

It belongs to the DNA mismatch repair MutS family. MutS2 subfamily. Homodimer. Binds to stalled ribosomes, contacting rRNA.

In terms of biological role, endonuclease that is involved in the suppression of homologous recombination and thus may have a key role in the control of bacterial genetic diversity. Its function is as follows. Acts as a ribosome collision sensor, splitting the ribosome into its 2 subunits. Detects stalled/collided 70S ribosomes which it binds and splits by an ATP-hydrolysis driven conformational change. Acts upstream of the ribosome quality control system (RQC), a ribosome-associated complex that mediates the extraction of incompletely synthesized nascent chains from stalled ribosomes and their subsequent degradation. Probably generates substrates for RQC. The chain is Endonuclease MutS2 from Staphylococcus aureus (strain bovine RF122 / ET3-1).